Consider the following 343-residue polypeptide: CCN family member 3 (343 aa).

An N-terminal signal peptide occupies residues 1 to 18 (MTPHLALCFILLIQQVAS). In terms of domain architecture, IGFBP N-terminal spans 19–90 (QKCPSQCDQC…RMETGTCMAL (72 aa)). Intrachain disulfides connect Cys-21–Cys-46, Cys-25–Cys-48, Cys-28–Cys-49, Cys-35–Cys-52, Cys-60–Cys-74, and Cys-66–Cys-87. One can recognise a VWFC domain in the interval 93–159 (NSCVFDGVVY…GECCEKWVCD (67 aa)). Residues 190-235 (ACIAQTTEWSACSKTCGMGVSSRVTNRNARCEMQKQIRLCMVRSCE) enclose the TSP type-1 domain. 5 disulfide bridges follow: Cys-249-Cys-286, Cys-266-Cys-300, Cys-277-Cys-316, Cys-280-Cys-318, and Cys-285-Cys-322. Positions 249 to 323 (CVRVRKTTKP…STCVCHYNCP (75 aa)) constitute a CTCK domain. An N-linked (GlcNAc...) asparagine glycan is attached at Asn-265.

It belongs to the CCN family.

The protein localises to the secreted. It localises to the cytoplasm. Its subcellular location is the cell junction. It is found in the gap junction. Immediate-early protein playing a role in various cellular processes including proliferation, adhesion, migration, differentiation and survival. Acts by binding to integrins or membrane receptors such as NOTCH1. In Xenopus laevis (African clawed frog), this protein is CCN family member 3 (ccn3).